The sequence spans 219 residues: Transmembrane emp24 domain-containing protein 10 (219 aa).

Residues 1–31 form the signal peptide; the sequence is MSGLSGPPTRRGPFPLALLLLFLLGPSLVLA. Positions 1-142 are required for interaction with STX17; it reads MSGLSGPPTR…KNYEEIAKVE (142 aa). Over 32–185 the chain is Lumenal; sequence ISFHLPINSR…RDTNESTNTR (154 aa). The 153-residue stretch at 41–193 folds into the GOLD domain; the sequence is RKCLREEIHK…TRVLYFSIFS (153 aa). 2 positions are modified to dimethylated arginine: arginine 171 and arginine 176. The N-linked (GlcNAc...) asparagine glycan is linked to asparagine 179. Residues 186–206 traverse the membrane as a helical segment; it reads VLYFSIFSMFCLIGLATWQVF. The interaction with COPG1 stretch occupies residues 204-219; it reads QVFYLRRFFKAKKLIE. Over 207-219 the chain is Cytoplasmic; it reads YLRRFFKAKKLIE. The tract at residues 207 to 219 is interaction with ARF1 and IL1B; the sequence is YLRRFFKAKKLIE. Residues 211-212 carry the COPII vesicle coat-binding motif; sequence FF. A COPI vesicle coat-binding motif is present at residues 211 to 219; the sequence is FFKAKKLIE.

The protein belongs to the EMP24/GP25L family. As to quaternary structure, predominantly dimeric and to a lesser extent monomeric in the ER. Monomer and dimer in ERGIC and cis-Golgi network. Forms homooligomer (via GOLD domain); the assembly is promoted by direct binding with leaderless cargos and may form a protein channel that facilitates cargo entry into the ERGIC. Forms heterooligomeric complexes with other members of the p24 family such as TMED2, TMED7 and TMED9. Interacts (via GOLD domain) with TMED2 (via GOLD domain); the complex is required for export of TMED10 from the ER to the cis-Golgi network; the complex is proposed to be involved in cis-Golgi network dynamics and / or biogenesis. Associates with the COPI vesicle coat subunits (coatomer). Tetramerization of the cytoplasmic domain at the Golgi membrane in vitro; the complex is proposed to interact with COPI coatomer and induce budding of the vesicles. Interacts with COPG1; the interaction involves TMED10 homodimer. Interacts with ARF1 (GDP-bound); the interaction probably involves a TMED10 oligomer. Interacts with SEC23A, SEC24B, SEC24C and SEC24D components of the coat protein complex II/COPII, indicative of an association of TMED10 with the COPII vesicle coat. Interacts with CD59. Interacts with MPPE1/PGAP5; the complex might recruit and sort GPI-anchored proteins to the ER-exit site, or the interaction might lead to recycling of PGAP5 between the ER and the Golgi. Interacts with F2LR1/PAR2. Interacts with KDELR2/ERD2; the interaction is disrupted by KDELR2 ligand. Found in a complex composed at least of SURF4, TMED2 and TMED10. Associates with the presenilin-dependent gamma-secretase complex. Interacts with STX17; the interaction is direct. Interacts with IL-1; the interaction is direct. Interacts with RAB21 (active GTP-bound form); the interaction is indirect and regulates TMED10 abundance and localization at the Golgi.

It is found in the endoplasmic reticulum membrane. Its subcellular location is the endoplasmic reticulum-Golgi intermediate compartment membrane. The protein localises to the golgi apparatus membrane. The protein resides in the golgi apparatus. It localises to the cis-Golgi network membrane. It is found in the trans-Golgi network membrane. Its subcellular location is the cytoplasmic vesicle. The protein localises to the secretory vesicle membrane. The protein resides in the cell membrane. It localises to the melanosome. Its function is as follows. Cargo receptor involved in protein vesicular trafficking and quality control in the endoplasmic reticulum (ER) and Golgi. The p24 protein family is a group of transmembrane proteins that bind coat protein complex I/COPI and coat protein complex II/COPII involved in vesicular trafficking between the membranes. Acts at the lumenal side for incorporation of secretory cargo molecules into transport vesicles and involved in vesicle coat formation at the cytoplasmic side. Mainly functions in the early secretory pathway and cycles between the ER, ER-Golgi intermediate compartment (ERGIC) and Golgi, mediating cargo transport through COPI and COPII-coated vesicles. In COPII vesicle-mediated anterograde transport, involved in the transport of GPI-anchored proteins by acting together with TMED2 as their cargo receptor; the function specifically implies SEC24C and SEC24D of the COPII vesicle coat and lipid raft-like microdomains of the ER. Recognizes GPI anchors structural remodeled in the ER by the GPI inositol-deacylase/PGAP1 and the metallophosphoesterase MPPE1/PGAP5. In COPI vesicle-mediated retrograde transport, involved in the biogenesis of COPI vesicles and vesicle coat recruitment. Involved in trafficking of amyloid beta A4 protein and soluble APP-beta release (independent from the modulation of gamma-secretase activity). Involved in the KDELR2-mediated retrograde transport of the toxin A subunit (CTX-A-K63)together with COPI and the COOH terminus of KDELR2. On Golgi membranes, acts as a primary receptor for ARF1-GDP, a GTP-binding protein involved in COPI-vesicle formation. Increases coatomer-dependent GTPase-activating activity of ARFGAP2 which mediates the hydrolysis of ARF1-bound GTP and therefore modulates protein trafficking from the Golgi apparatus. Involved in the exocytic trafficking of G protein-coupled receptors F2LR1/PAR2 (trypsin and tryspin-like enzyme receptor), OPRM1 (opioid receptor) and P2RY4 (UTD and UDP receptor) from the Golgi to the plasma membrane, thus contributing to receptor resensitization. In addition to its cargo receptor activity, may also act as a protein channel after oligomerization, facilitating the post-translational entry of leaderless cytoplasmic cargo into the ERGIC. Involved in the translocation into ERGIC, the vesicle entry and the secretion of leaderless cargos (lacking the secretion signal sequence), including the mature form of interleukin 1/IL-1 family members, the alpha-crystallin B chain HSPB5, the carbohydrate-binding proteins galectin-1/LGALS1 and galectin-3/LGALS3, the microtubule-associated protein Tau/MAPT, and the annexin A1/ANXA1; the translocation process is dependent on cargo protein unfolding and enhanced by chaperones HSP90AB1 and HSP90B1/GRP9. Could also associates with the presenilin-dependent gamma-secretase complex in order to regulate gamma-cleavages of the amyloid beta A4 protein to yield amyloid-beta 40/Abeta40. This is Transmembrane emp24 domain-containing protein 10 (TMED10) from Pongo abelii (Sumatran orangutan).